A 725-amino-acid chain; its full sequence is ATP-dependent zinc metalloprotease FtsH (725 aa).

Residues 1 to 11 are Cytoplasmic-facing; the sequence is MDKMKKPKINW. Residues 12–32 form a helical membrane-spanning segment; it reads LLIVIVGIIAALLITVLVLLF. Residues 33-160 lie on the Extracellular side of the membrane; it reads SPKTQPKSFD…LFGQHIVQEN (128 aa). A helical transmembrane segment spans residues 161-181; the sequence is GFITFIKAIWFPALIAIIIFL. At 182–725 the chain is on the cytoplasmic side; sequence GYKAQSRAAS…EEETLAEKAE (544 aa). 252-259 contributes to the ATP binding site; the sequence is GPPGTGKT. H474 contacts Zn(2+). Residue E475 is part of the active site. Residues H478 and D552 each coordinate Zn(2+). The interval 680–725 is disordered; sequence QVNESQEKDKQKNAQIKEDLSKMDKKDNLTKAKDKGEEETLAEKAE. The span at 684–725 shows a compositional bias: basic and acidic residues; the sequence is SQEKDKQKNAQIKEDLSKMDKKDNLTKAKDKGEEETLAEKAE.

It in the central section; belongs to the AAA ATPase family. The protein in the C-terminal section; belongs to the peptidase M41 family. As to quaternary structure, homohexamer. The cofactor is Zn(2+).

The protein resides in the cell membrane. In terms of biological role, acts as a processive, ATP-dependent zinc metallopeptidase for both cytoplasmic and membrane proteins. Plays a role in the quality control of integral membrane proteins. This is ATP-dependent zinc metalloprotease FtsH from Mycoplasmopsis pulmonis (strain UAB CTIP) (Mycoplasma pulmonis).